We begin with the raw amino-acid sequence, 330 residues long: 5'-AMP-activated protein kinase subunit gamma-1 (330 aa).

Residues 1-24 (MEAVPSSDSYPAVENEHLQETPES) are disordered. CBS domains follow at residues 43-103 (PTSS…KSAL), 125-187 (SFKP…PKPE), and 198-260 (IGTY…NLDV). ADP contacts are provided by residues Arg70, 85 to 90 (MLTITD), Val130, 151 to 152 (HR), and Lys170. AMP is bound by residues Arg70, 85–90 (MLTITD), Val130, His151, 151–152 (HR), Lys170, Thr200, Ala205, 226–227 (SA), and 242–245 (SKFD). Residues Arg70, 85 to 90 (MLTITD), Val130, 151 to 152 (HR), Arg152, and Lys170 each bind ATP. An AMPK pseudosubstrate motif is present at residues 138-159 (LFDAVSSLIRNKIHRLPVIDPE). 242–245 (SKFD) contributes to the ADP binding site. 242–245 (SKFD) is an ATP binding site. Ser261 is subject to Phosphoserine; by ULK1. Thr263 bears the Phosphothreonine; by ULK1 mark. Residue Arg269 participates in ADP binding. Arg269 is an AMP binding site. Arg269 provides a ligand contact to ATP. Position 270 is a phosphoserine; by ULK1 (Ser270). Positions 272-329 (YFEGVLKCYLHETLETIINRLVEAEVHRLVVVDENDVVKGIVSLSDILQALVLTGGEK) constitute a CBS 4 domain. ADP contacts are provided by residues Leu277 and 298 to 299 (HR). AMP is bound by residues Leu277, His298, 298–299 (HR), and 314–317 (SLSD). Residues Leu277 and 298-299 (HR) contribute to the ATP site.

It belongs to the 5'-AMP-activated protein kinase gamma subunit family. AMPK is a heterotrimer of an alpha catalytic subunit (PRKAA1 or PRKAA2), a beta (PRKAB1 or PRKAB2) and a gamma non-catalytic subunits (PRKAG1, PRKAG2 or PRKAG3). Interacts with FNIP1 and FNIP2. In terms of processing, phosphorylated by ULK1 and ULK2; leading to negatively regulate AMPK activity and suggesting the existence of a regulatory feedback loop between ULK1, ULK2 and AMPK. Post-translationally, glycosylated; O-GlcNAcylated by OGT, promoting the AMP-activated protein kinase (AMPK) activity.

Functionally, AMP/ATP-binding subunit of AMP-activated protein kinase (AMPK), an energy sensor protein kinase that plays a key role in regulating cellular energy metabolism. In response to reduction of intracellular ATP levels, AMPK activates energy-producing pathways and inhibits energy-consuming processes: inhibits protein, carbohydrate and lipid biosynthesis, as well as cell growth and proliferation. AMPK acts via direct phosphorylation of metabolic enzymes, and by longer-term effects via phosphorylation of transcription regulators. Also acts as a regulator of cellular polarity by remodeling the actin cytoskeleton; probably by indirectly activating myosin. Gamma non-catalytic subunit mediates binding to AMP, ADP and ATP, leading to activate or inhibit AMPK: AMP-binding results in allosteric activation of alpha catalytic subunit (PRKAA1 or PRKAA2) both by inducing phosphorylation and preventing dephosphorylation of catalytic subunits. ADP also stimulates phosphorylation, without stimulating already phosphorylated catalytic subunit. ATP promotes dephosphorylation of catalytic subunit, rendering the AMPK enzyme inactive. This is 5'-AMP-activated protein kinase subunit gamma-1 (PRKAG1) from Bos taurus (Bovine).